Consider the following 637-residue polypeptide: Chaperone protein HtpG (637 aa).

The interval 1-345 (MSQQETHGFQ…SNDLPLNVSR (345 aa)) is a; substrate-binding. Residues 346-562 (EILQDNQVTT…EGEMSTQMIK (217 aa)) are b. Residues 563 to 637 (LMQAAGQPVP…TNQMLLASVK (75 aa)) form a c region.

It belongs to the heat shock protein 90 family. In terms of assembly, homodimer.

The protein resides in the cytoplasm. Molecular chaperone. Has ATPase activity. This Shewanella frigidimarina (strain NCIMB 400) protein is Chaperone protein HtpG.